The primary structure comprises 314 residues: PDZ domain-containing protein GIPC2 (314 aa).

Basic residues predominate over residues 1 to 12 (MPLGLRGKKKAA). The tract at residues 1–36 (MPLGLRGKKKAAKSKETARLVEGERSGGSQGVPGPP) is disordered. The segment covering 13-25 (KSKETARLVEGER) has biased composition (basic and acidic residues). The PDZ domain occupies 117 to 197 (EVNVYKSEDS…EELFTLQLIE (81 aa)).

The protein belongs to the GIPC family. In terms of assembly, probably interacts with SEMA5A.

Its subcellular location is the cytoplasm. The protein is PDZ domain-containing protein GIPC2 (Gipc2) of Rattus norvegicus (Rat).